A 270-amino-acid polypeptide reads, in one-letter code: Phosphatidylglycerol--prolipoprotein diacylglyceryl transferase (270 aa).

The next 7 membrane-spanning stretches (helical) occupy residues 17-37, 59-79, 95-115, 129-149, 175-195, 202-222, and 237-257; these read LAIR…LWFG, MLFY…VLFY, WEGG…MWVF, FIAP…FING, PSQL…LWLF, MGAV…LAEF, and LSMG…MVVW. R142 provides a ligand contact to a 1,2-diacyl-sn-glycero-3-phospho-(1'-sn-glycerol).

Belongs to the Lgt family.

It localises to the cell inner membrane. The enzyme catalyses L-cysteinyl-[prolipoprotein] + a 1,2-diacyl-sn-glycero-3-phospho-(1'-sn-glycerol) = an S-1,2-diacyl-sn-glyceryl-L-cysteinyl-[prolipoprotein] + sn-glycerol 1-phosphate + H(+). It participates in protein modification; lipoprotein biosynthesis (diacylglyceryl transfer). In terms of biological role, catalyzes the transfer of the diacylglyceryl group from phosphatidylglycerol to the sulfhydryl group of the N-terminal cysteine of a prolipoprotein, the first step in the formation of mature lipoproteins. The protein is Phosphatidylglycerol--prolipoprotein diacylglyceryl transferase of Cupriavidus metallidurans (strain ATCC 43123 / DSM 2839 / NBRC 102507 / CH34) (Ralstonia metallidurans).